A 323-amino-acid polypeptide reads, in one-letter code: DNA primase small subunit PriS (323 aa).

Residues Asp97, Asp99, and Asp274 contribute to the active site.

It belongs to the eukaryotic-type primase small subunit family. In terms of assembly, heterodimer of a small subunit (PriS) and a large subunit (PriL). Mg(2+) is required as a cofactor. The cofactor is Mn(2+).

Functionally, catalytic subunit of DNA primase, an RNA polymerase that catalyzes the synthesis of short RNA molecules used as primers for DNA polymerase during DNA replication. The small subunit contains the primase catalytic core and has DNA synthesis activity on its own. Binding to the large subunit stabilizes and modulates the activity, increasing the rate of DNA synthesis while decreasing the length of the DNA fragments, and conferring RNA synthesis capability. The DNA polymerase activity may enable DNA primase to also catalyze primer extension after primer synthesis. May also play a role in DNA repair. The polypeptide is DNA primase small subunit PriS (Methanothermobacter thermautotrophicus (strain ATCC 29096 / DSM 1053 / JCM 10044 / NBRC 100330 / Delta H) (Methanobacterium thermoautotrophicum)).